A 666-amino-acid polypeptide reads, in one-letter code: Calpain-10 (666 aa).

The region spanning 13 to 321 (LFRDAAFPAS…FDEVTIGYPV (309 aa)) is the Calpain catalytic domain. Active-site residues include Cys-73, His-238, and Asn-263. Domain III regions lie at residues 322–488 (TEAG…ISLS) and 507–648 (EWET…IHSQ).

It belongs to the peptidase C2 family.

Functionally, calcium-regulated non-lysosomal thiol-protease which catalyzes limited proteolysis of substrates involved in cytoskeletal remodeling and signal transduction. May play a role in insulin-stimulated glucose uptake. The chain is Calpain-10 (Capn10) from Mus musculus (Mouse).